We begin with the raw amino-acid sequence, 469 residues long: Coiled-coil domain-containing protein 6 (469 aa).

Residues 1–10 show a composition bias toward acidic residues; the sequence is MADSASESDT. The segment at 1–37 is disordered; sequence MADSASESDTDAAGGGPAAMQSSCSATSGGSGGGGGG. At Ala2 the chain carries N-acetylalanine. At Ser45 the chain carries Phosphoserine. A coiled-coil region spans residues 47–320; the sequence is FRLEELTNRL…LCRQLSESES (274 aa). 3 repeat units span residues 99–127, 128–156, and 157–185. The interval 99-228 is 5 X 29 AA tandem repeats; that stretch reads EQEEEFISNT…AEKRILQEKL (130 aa). A 4; approximate repeat occupies 186-199; the sequence is EQLRREKIDLENTL. Repeat unit 5 spans residues 200-228; sequence EQEQEALVNRLWKRMDKLEAEKRILQEKL. Phosphoserine is present on residues Ser233, Ser237, Ser242, Ser247, Ser277, and Ser316. The disordered stretch occupies residues 335–362; it reads AQGLRPRTVSSPIPYTPSPSSSRPISPG. Phosphothreonine is present on Thr342. A compositionally biased stretch (low complexity) spans 344–361; the sequence is SSPIPYTPSPSSSRPISP. Ser356 and Ser360 each carry phosphoserine. Arg380 is subject to Omega-N-methylarginine. Phosphoserine occurs at positions 388 and 406. The disordered stretch occupies residues 394 to 469; the sequence is QHMGASHGIT…QHPVHPSSQP (76 aa). Pro residues predominate over residues 419-444; that stretch reads PTPPPSPNTQSPVQPPPPPPPPPMQP. Residues 435–444 carry the SH3-binding motif; the sequence is PPPPPPPMQP. The span at 460-469 shows a compositional bias: low complexity; the sequence is QHPVHPSSQP.

The protein resides in the cytoplasm. It localises to the cytoskeleton. This chain is Coiled-coil domain-containing protein 6 (Ccdc6), found in Mus musculus (Mouse).